The primary structure comprises 97 residues: NELL2-interacting cell ontogeny regulator 1 (97 aa).

The signal sequence occupies residues 1 to 35 (MAPLPPCGPPRSPPPRLLLLLLLLSATLLGAPARA).

The protein belongs to the NICOL family. Interacts with NELL2; triggers epididymal differentiation. Interacts with cell surface receptor TFRC; the interaction mediates uptake of NICOL1 into fibroblasts.

It is found in the secreted. Its subcellular location is the cytoplasm. It localises to the perinuclear region. In terms of biological role, mRNA-binding protein which interacts with a range of target mRNAs including SERPINE1, ACTA2, CCN2 and COL4A1 and may promote extracellular matrix production. Binds to the 3'-UTR of SERPINE1 mRNA and stabilizes the mRNA, possibly by competing for binding with SERBP1 and preventing SERBP1-mediated mRNA degradation. Also binds to the 3'-UTR of ACTA2. Testis-derived lumicrine factor that triggers epididymal differentiation and sperm maturation. The sequence is that of NELL2-interacting cell ontogeny regulator 1 from Bos taurus (Bovine).